A 179-amino-acid polypeptide reads, in one-letter code: MSSRVLTPDVVGIDALVHDHQTVLAKAEGGVVAVFANNAPAFYAITPARLAELLALEEKLARPGSDVALDDQLYQEPQTAPVAVPMGKFAMYPDWQPDADFIRLAALWGVALRESVTAEELASFIAYWQAEGKVFHHVQWQQKLARSLQIGRASNGGLPKRDVNTVSEPDSQIPPGFRG.

Residues 156 to 179 (GGLPKRDVNTVSEPDSQIPPGFRG) form a disordered region.

It belongs to the DnaT family. In terms of assembly, homooligomerizes. Interacts with PriB. Component of the replication restart primosome. Primosome assembly occurs via a 'hand-off' mechanism. PriA binds to replication forks, subsequently PriB then DnaT bind; DnaT then displaces ssDNA to generate the helicase loading substrate.

In terms of biological role, involved in the restart of stalled replication forks, which reloads the replicative helicase on sites other than the origin of replication. Can function in multiple replication restart pathways. Displaces ssDNA from a PriB-ssDNA complex. Probably forms a spiral filament on ssDNA. In Escherichia coli O1:K1 / APEC, this protein is Replication restart protein DnaT.